Consider the following 36-residue polypeptide: Glucagon (36 aa).

Belongs to the glucagon family. Produced by the X-cells of the islets of pancreas.

Its subcellular location is the secreted. Functionally, promotes hydrolysis of glycogen and lipids, and raises the blood sugar level. This is Glucagon (gcg) from Hydrolagus colliei (Spotted ratfish).